Reading from the N-terminus, the 291-residue chain is Nucleotide-binding protein LMHCC_0126 (291 aa).

13 to 20 (GMSGAGKT) lines the ATP pocket. 63–66 (DLRG) serves as a coordination point for GTP.

Belongs to the RapZ-like family.

Functionally, displays ATPase and GTPase activities. The polypeptide is Nucleotide-binding protein LMHCC_0126 (Listeria monocytogenes serotype 4a (strain HCC23)).